The following is a 196-amino-acid chain: Pycsar effector protein GmPycTM (196 aa).

The next 3 membrane-spanning stretches (helical) occupy residues 34–54 (ISFS…SGII), 82–102 (ITTI…TYLF), and 176–196 (VNWL…FLFL).

The protein resides in the cell inner membrane. Its function is as follows. Pycsar (pyrimidine cyclase system for antiphage resistance) provides immunity against bacteriophage. The pyrimidine cyclase (PycC) synthesizes cyclic nucleotides in response to infection; these serve as specific second messenger signals. The signals activate the adjacent effector, leading to bacterial cell death and abortive phage infection. A clade C Pycsar system. Functionally, the effector gene of a two-gene Pycsar system. Expression of this and adjacent uridylate cyclase GmPycC (AC P0DV42) probably confers resistance to bacteriophage. The genes are probably only expressed in response to bacteriophage infection. Probably only responds to cUMP (produced by its cognate NTP cyclase), acts by impairing membrane integrity. This chain is Pycsar effector protein GmPycTM, found in Gulbenkiania mobilis.